Here is a 102-residue protein sequence, read N- to C-terminus: Small ribosomal subunit protein uS10 (102 aa).

It belongs to the universal ribosomal protein uS10 family. Part of the 30S ribosomal subunit.

In terms of biological role, involved in the binding of tRNA to the ribosomes. In Rhizobium etli (strain CIAT 652), this protein is Small ribosomal subunit protein uS10.